The sequence spans 590 residues: Leucine-rich repeat transmembrane neuronal protein 4 (590 aa).

The first 30 residues, 1 to 30 (MGFRLITQLKGMSVFLVLFPTLLLVMLTGA), serve as a signal peptide directing secretion. An LRRNT domain is found at 31–61 (QRACPKNCRCDGKIVYCESHAFADIPENISG). At 31 to 424 (QRACPKNCRC…HEYEHVSFHK (394 aa)) the chain is on the extracellular side. The N-linked (GlcNAc...) asparagine glycan is linked to N58. LRR repeat units follow at residues 62–83 (GSQG…QFAG), 86–107 (QLIW…AFQG), 110–131 (RLKE…TFHP), 134–155 (NLRN…QFKG), 158–179 (KLII…VFQD), 182–203 (NLDF…AFAG), 206–226 (KLKE…AHFP), 230–251 (NLRS…LTWT), 254–275 (SLHT…TFKC), and 278–299 (NLQK…TVNA). N126 is a glycosylation site (N-linked (GlcNAc...) asparagine). An N-linked (GlcNAc...) asparagine glycan is attached at N291. The LRRCT domain maps to 311-362 (NMWECSRSICPLFYWLKNFKGNKESTMICAGPKHIQGEKVSDAVETYNICSD). Residues 425–445 (IIAGSVALFLSVAMILLVIYV) traverse the membrane as a helical segment. Topologically, residues 446–590 (SWKRYPASMK…PAIYLERITN (145 aa)) are cytoplasmic.

It belongs to the LRRTM family. As to quaternary structure, peripherally associated with AMPAR complex. AMPAR complex consists of an inner core made of 4 pore-forming GluA/GRIA proteins (GRIA1, GRIA2, GRIA3 and GRIA4) and 4 major auxiliary subunits arranged in a twofold symmetry. One of the two pairs of distinct binding sites is occupied either by CNIH2, CNIH3 or CACNG2, CACNG3. The other harbors CACNG2, CACNG3, CACNG4, CACNG8 or GSG1L. This inner core of AMPAR complex is complemented by outer core constituents binding directly to the GluA/GRIA proteins at sites distinct from the interaction sites of the inner core constituents. Outer core constituents include at least PRRT1, PRRT2, CKAMP44/SHISA9, FRRS1L and NRN1. The proteins of the inner and outer core serve as a platform for other, more peripherally associated AMPAR constituents, including LRRTM4. Alone or in combination, these auxiliary subunits control the gating and pharmacology of the AMPAR complex and profoundly impact their biogenesis and protein processing. In terms of tissue distribution, predominantly in the brain (at protein level). Also expressed in the cerebellum and other tissues.

Its subcellular location is the cell membrane. It localises to the postsynaptic cell membrane. Functionally, may play a role in the development and maintenance of the vertebrate nervous system. Exhibits strong synaptogenic activity, restricted to excitatory presynaptic differentiation. The protein is Leucine-rich repeat transmembrane neuronal protein 4 (Lrrtm4) of Mus musculus (Mouse).